The primary structure comprises 511 residues: 2-isopropylmalate synthase (511 aa).

Positions 5-267 constitute a Pyruvate carboxyltransferase domain; sequence LIIFDTTLRD…DTNIDTMHIL (263 aa). 4 residues coordinate Mn(2+): Asp14, His202, His204, and Asn238. The segment at 393 to 511 is regulatory domain; it reads KLVSLKVCTE…TVTNKAHPQI (119 aa).

It belongs to the alpha-IPM synthase/homocitrate synthase family. LeuA type 1 subfamily. As to quaternary structure, homodimer. Mn(2+) serves as cofactor.

It is found in the cytoplasm. The catalysed reaction is 3-methyl-2-oxobutanoate + acetyl-CoA + H2O = (2S)-2-isopropylmalate + CoA + H(+). Its pathway is amino-acid biosynthesis; L-leucine biosynthesis; L-leucine from 3-methyl-2-oxobutanoate: step 1/4. Its function is as follows. Catalyzes the condensation of the acetyl group of acetyl-CoA with 3-methyl-2-oxobutanoate (2-ketoisovalerate) to form 3-carboxy-3-hydroxy-4-methylpentanoate (2-isopropylmalate). In Vesicomyosocius okutanii subsp. Calyptogena okutanii (strain HA), this protein is 2-isopropylmalate synthase.